Consider the following 158-residue polypeptide: NADH-quinone oxidoreductase subunit B (158 aa).

[4Fe-4S] cluster is bound by residues Cys-37, Cys-38, Cys-102, and Cys-132.

Belongs to the complex I 20 kDa subunit family. As to quaternary structure, NDH-1 is composed of 14 different subunits. Subunits NuoB, C, D, E, F, and G constitute the peripheral sector of the complex. It depends on [4Fe-4S] cluster as a cofactor.

Its subcellular location is the cell inner membrane. The catalysed reaction is a quinone + NADH + 5 H(+)(in) = a quinol + NAD(+) + 4 H(+)(out). In terms of biological role, NDH-1 shuttles electrons from NADH, via FMN and iron-sulfur (Fe-S) centers, to quinones in the respiratory chain. Couples the redox reaction to proton translocation (for every two electrons transferred, four hydrogen ions are translocated across the cytoplasmic membrane), and thus conserves the redox energy in a proton gradient. This chain is NADH-quinone oxidoreductase subunit B, found in Alkalilimnicola ehrlichii (strain ATCC BAA-1101 / DSM 17681 / MLHE-1).